A 359-amino-acid polypeptide reads, in one-letter code: RNA-binding protein 4B (359 aa).

RRM domains follow at residues 2–72 and 78–148; these read VKLF…ASKN and TKLH…LSTS. Residues 160-177 form a CCHC-type zinc finger; it reads SGCYRCGKEGHWSKECPV. Residues 196 to 359 form an interaction with TNPO3 region; it reads AVRTPYTMGY…YVDRARYSAF (164 aa).

In terms of assembly, interacts with TNPO3, which may mediate nuclear import of the protein. As to expression, expressed in liver and kidney (at protein level). Ubiquitously expressed.

The protein localises to the nucleus. The protein resides in the nucleolus. Its function is as follows. Required for the translational activation of PER1 mRNA in response to circadian clock. Binds directly to the 3'-UTR of the PER1 mRNA. In Homo sapiens (Human), this protein is RNA-binding protein 4B (RBM4B).